A 395-amino-acid chain; its full sequence is Putative transcription factor 079L (395 aa).

It belongs to the IIV-6 282R family.

In terms of biological role, transcription activation. The chain is Putative transcription factor 079L from Aedes vexans (Inland floodwater mosquito).